Consider the following 437-residue polypeptide: UDP-glucosyl transferase 79L3 (437 aa).

H18 functions as the Proton acceptor in the catalytic mechanism. Catalysis depends on D117, which acts as the Charge relay. UDP-binding residues include S254, W312, V313, H330, S335, and E338.

Belongs to the UDP-glycosyltransferase family. As to expression, mainly expressed in flowers, flower buds and young leaves, and, to a lesser extent, in old leaves, stems and roots.

It functions in the pathway secondary metabolite biosynthesis; terpenoid biosynthesis. In terms of biological role, component of the oleanane-type triterpene saponins (e.g. saponarioside A and saponarioside B) biosynthetic pathway, leading to the production of natural products with detergent properties used as traditional sources of soap. A glycosyltransferase that mediates the conversion of QA-triFR to QA-triFRX via the elongation of the C-28 sugar chain with a D-xylose. The chain is UDP-glucosyl transferase 79L3 from Saponaria officinalis (Common soapwort).